The sequence spans 415 residues: Maintenance of mitochondrial morphology protein 1 (415 aa).

Over 1–18 the chain is Lumenal; it reads MADICPSRSEPTLSFTQG. A helical membrane pass occupies residues 19–39; that stretch reads LILGQLSVVLLLAAFIKFFIF. Residues 40-415 lie on the Cytoplasmic side of the membrane; sequence GDPPSPEVVA…MPGSMPGSMP (376 aa). Positions 114-330 constitute an SMP-LTD domain; that stretch reads QPESLDWFNV…EPRFQEIALP (217 aa). Positions 373–389 are enriched in basic and acidic residues; it reads IEAEAHGGADRVPDSLR. Residues 373 to 415 are disordered; sequence IEAEAHGGADRVPDSLRYRHRPRADEEFPGAGSMPGSMPGSMP. Low complexity predominate over residues 404 to 415; that stretch reads GSMPGSMPGSMP.

Belongs to the MMM1 family. In terms of assembly, homodimer. Component of the ER-mitochondria encounter structure (ERMES) or MDM complex, composed of mmm-1, mdm10, mdm12 and mdm34. A mmm-1 homodimer associates with one molecule of mdm12 on each side in a pairwise head-to-tail manner, and the SMP-LTD domains of mmm-1 and mdm12 generate a continuous hydrophobic tunnel for phospholipid trafficking.

The protein resides in the endoplasmic reticulum membrane. Functionally, component of the ERMES/MDM complex, which serves as a molecular tether to connect the endoplasmic reticulum (ER) and mitochondria. Components of this complex are involved in the control of mitochondrial shape and protein biogenesis, and function in nonvesicular lipid trafficking between the ER and mitochondria. The mdm12-mmm-1 subcomplex functions in the major beta-barrel assembly pathway that is responsible for biogenesis of all outer membrane beta-barrel proteins, and acts in a late step after the SAM complex. The mdm10-mdm12-mmm-1 subcomplex further acts in the TOM40-specific pathway after the action of the mdm12-mmm-1 complex. Essential for establishing and maintaining the structure of mitochondria and maintenance of mtDNA nucleoids. This Neurospora crassa (strain ATCC 24698 / 74-OR23-1A / CBS 708.71 / DSM 1257 / FGSC 987) protein is Maintenance of mitochondrial morphology protein 1 (mmm-1).